A 747-amino-acid chain; its full sequence is MNHSPLKTALAYECFQDQDNSTLALPSDQKMKTGTSGRQRVQEQVMMTVKRQKSKSSQSSTLSHSNRGSMYDGLADNYNYGTTSRSSYYSKFQAGNGSWGYPIYNGTLKREPDNRRFSSYSQMENWSRHYPRGSCNTTGAGSDICFMQKIKASRSEPDLYCDPRGTLRKGTLGSKGQKTTQNRYSFYSTCSGQKAIKKCPVRPPSCASKQDPVYIPPISCNKDLSFGHSRASSKICSEDIECSGLTIPKAVQYLSSQDEKYQAIGAYYIQHTCFQDESAKQQVYQLGGICKLVDLLRSPNQNVQQAAAGALRNLVFRSTTNKLETRRQNGIREAVSLLRRTGNAEIQKQLTGLLWNLSSTDELKEELIADALPVLADRVIIPFSGWCDGNSNMSREVVDPEVFFNATGCLRKRLGMRELLALVPQRATSSRVNLSSADAGRQTMRNYSGLIDSLMAYVQNCVAASRCDDKSVENCMCVLHNLSYRLDAEVPTRYRQLEYNARNAYTEKSSTGCFSNKSDKMMNNNYDCPLPEEETNPKGSGWLYHSDAIRTYLNLMGKSKKDATLEACAGALQNLTASKGLMSSGMSQLIGLKEKGLPQIARLLQSGNSDVVRSGASLLSNMSRHPLLHRVMGNQVFPEVTRLLTSHTGNTSNSEDILSSACYTVRNLMASQPQLAKQYFSSSMLNNIINLCRSSASPKAAEAARLLLSDMWSSKELQGVLRQQGFDRNMLGTLAGANSLRNFTSRF.

Residues 1–234 (MNHSPLKTAL…SFGHSRASSK (234 aa)) form a required for binding to single stranded DNA region. Positions 1-286 (MNHSPLKTAL…ESAKQQVYQL (286 aa)) are required for interaction with EIF4A1. Phosphoserine is present on Ser4. The tract at residues 48-68 (TVKRQKSKSSQSSTLSHSNRG) is disordered. Phosphorylation in this region is required for cytoplasmic localization and protein stabilization stretches follow at residues 54 to 69 (SKSSQSSTLSHSNRGS) and 116 to 191 (RFSS…STCS). Ser118 carries the post-translational modification Phosphoserine; by PKB/AKT2. Phosphoserine occurs at positions 119, 121, and 142. A required for WNT-mediated nuclear localization region spans residues 160–269 (YCDPRGTLRK…KYQAIGAYYI (110 aa)). ARM repeat units follow at residues 243–274 (SGLTIPKAVQYLSSQDEKYQAIGAYYIQHTCF), 275–316 (QDES…NLVF), 317–359 (RSTT…NLSS), 360–415 (TDEL…KRLG), 416–463 (MREL…NCVA), 525–556 (NYDCPLPEEETNPKGSGWLYHSDAIRTYLNLM), 557–603 (GKSK…IARL), 604–649 (LQSG…SHTG), and 650–713 (NTSN…DMWS).

It belongs to the beta-catenin family. Part of a complex that contains DSG3, PKP1, YAP1 and YWHAG; the complex is required for localization of DSG3 and YAP1 to the cell membrane in keratinocytes. Interacts with DSP. Interacts (via N-terminus) with KRT5/CK5, KRT8/CK8 (via rod domain), KRT15/CK15 and KRT18/CK18 (via rod domain) as part of intermediate filaments. Interacts with VIM (via rod domain). Interacts with DSP. Interacts with DES. Interacts with FXR1; the interaction may facilitate the binding of PKP1 to PKP2, PKP3 and DSP mRNA. Interacts (via N-terminus) with EIF4A1; the interaction promotes EIF4A1 recruitment to the cap-dependent translation complex and EIF4A1 ATPase activity. Interacts with TJP1/ZO-1; the interaction facilitates TJP1/ZO-1 localization to the plasma membrane. Interacts (when phosphorylated) with YWHAG; the interaction results in translocation of PKP1 to the cytoplasm and loss of intercellular adhesion in keratinocytes. In terms of processing, phosphorylated by AKT2; required for interaction with YWHAG and subsequent localization away from desmosomes to the cytoplasm. Phosphorylation of Ser-118 by AKT2 promotes PKP1-driven cap-dependent mRNA translation and decreases intercellular adhesion, phosphorylation is promoted by insulin. Phosphorylation by RIPK4 at the N-terminus is required for its role in differentiation of keratinocytes and DSG1 localization at cell junctions. Expressed in stratified squamous, complex, glandular duct and bladder epithelia (at protein level). In terms of tissue distribution, widely expressed (at protein level).

It localises to the cell junction. The protein resides in the desmosome. Its subcellular location is the nucleus. The protein localises to the cytoplasm. It is found in the perinuclear region. It localises to the cell membrane. The protein resides in the stress granule. Functionally, a component of desmosome cell-cell junctions which are required for positive regulation of cellular adhesion. Plays a role in desmosome protein expression regulation and localization to the desmosomal plaque, thereby maintaining cell sheet integrity and anchorage of desmosomes to intermediate filaments. Required for localization of DSG3 and YAP1 to the cell membrane in keratinocytes in response to mechanical strain, via the formation of an interaction complex composed of DSG3, YAP1, PKP1 and YWHAG. Positively regulates differentiation of keratinocytes, potentially via promoting localization of DSG1 at desmosome cell junctions. Required for calcium-independent development and maturation of desmosome plaques specifically at lateral cell-cell contacts in differentiating keratinocytes. Plays a role in the maintenance of DSG3 protein abundance, DSG3 clustering and localization of these clusters to the cell membrane in keratinocytes. May also promote keratinocyte proliferation and morphogenesis during postnatal development. Required for tight junction inside-out transepidermal barrier function of the skin. Promotes Wnt-mediated proliferation and differentiation of ameloblasts, via facilitating TJP1/ZO-1 localization to tight junctions. Binds single-stranded DNA (ssDNA), and may thereby play a role in sensing DNA damage and promoting cell survival. Positively regulates cap-dependent translation and as a result cell proliferation, via recruitment of EIF4A1 to the initiation complex and promotion of EIF4A1 ATPase activity. Regulates the mRNA stability and protein abundance of desmosome components PKP2, PKP3, DSC2 and DSP, potentially via its interaction with FXR1. In Homo sapiens (Human), this protein is Plakophilin-1 (PKP1).